Here is a 955-residue protein sequence, read N- to C-terminus: Vacuolar membrane protease (955 aa).

Topologically, residues 1-16 are cytoplasmic; that stretch reads MASLRLPRANPLAFTR. The helical transmembrane segment at 17-37 threads the bilayer; it reads WPVTVITAIVYLALLIPLLVV. Residues 38-390 are Vacuolar-facing; it reads HHVVPSAPSS…STFVLFQLHT (353 aa). N-linked (GlcNAc...) asparagine glycans are attached at residues Asn-53 and Asn-119. Positions 174 and 186 each coordinate Zn(2+). Glu-220 functions as the Proton acceptor in the catalytic mechanism. Positions 221, 246, and 319 each coordinate Zn(2+). Residues 391-411 traverse the membrane as a helical segment; the sequence is LFALLVTLLIVGPLTLLFTSI. The Cytoplasmic segment spans residues 412–442; it reads ALTKADKMYLFRSSAKSEDRLDVVPLQGLRG. The chain crosses the membrane as a helical span at residues 443-463; it reads FFRFPFLFGIPTVVTVGLAYL. At 464-473 the chain is on the vacuolar side; it reads VTKVNPYIIH. Residues 474-494 traverse the membrane as a helical segment; the sequence is SSAYAVWSMMVAAWVFLAWFV. Over 495 to 508 the chain is Cytoplasmic; it reads SRVADFARPSAFHR. The helical transmembrane segment at 509–529 threads the bilayer; it reads IYTLTWMYVLSWVSAVIATVY. Residues 530 to 533 are Vacuolar-facing; it reads ANQR. A helical membrane pass occupies residues 534–554; the sequence is GLAGGYFIFFFHAGIFLAKWI. At 555–656 the chain is on the cytoplasmic side; the sequence is SYLELFALPS…WSYALPKWTW (102 aa). Over residues 574–590 the composition is skewed to low complexity; that stretch reads SASGRASGHGSRRGTTS. The segment at 574–611 is disordered; it reads SASGRASGHGSRRGTTSGEDDGEEAEEEPTESTSLLGS. The segment covering 591 to 603 has biased composition (acidic residues); it reads GEDDGEEAEEEPT. A helical transmembrane segment spans residues 657–677; that stretch reads VLQLLLTAPITLIMVGPLALL. Residues 678–693 are Vacuolar-facing; that stretch reads TISAISQTGQDGGHPL. The chain crosses the membrane as a helical span at residues 694–714; sequence FAYVAIAIFTTIMLTPLLPFI. Over 715-721 the chain is Cytoplasmic; that stretch reads HRYTYHV. Residues 722–742 form a helical membrane-spanning segment; it reads PLFLLAVFLGTLIYNLVAFPF. At 743–955 the chain is on the vacuolar side; that stretch reads SDSNRLKLYY…RRAFEIGNDD (213 aa). N-linked (GlcNAc...) asparagine glycosylation occurs at Asn-826.

It belongs to the peptidase M28 family. Requires Zn(2+) as cofactor.

Its subcellular location is the vacuole membrane. May be involved in vacuolar sorting and osmoregulation. This chain is Vacuolar membrane protease, found in Aspergillus oryzae (strain ATCC 42149 / RIB 40) (Yellow koji mold).